A 79-amino-acid chain; its full sequence is Small ribosomal subunit protein bS18 (79 aa).

This sequence belongs to the bacterial ribosomal protein bS18 family. Part of the 30S ribosomal subunit. Forms a tight heterodimer with protein bS6.

In terms of biological role, binds as a heterodimer with protein bS6 to the central domain of the 16S rRNA, where it helps stabilize the platform of the 30S subunit. The chain is Small ribosomal subunit protein bS18 from Rhodopseudomonas palustris (strain BisB18).